A 457-amino-acid chain; its full sequence is Cystathionine beta-lyase (457 aa).

The disordered stretch occupies residues methionine 1–arginine 41.

The protein belongs to the trans-sulfuration enzymes family. Pyridoxal 5'-phosphate serves as cofactor.

The protein localises to the cytoplasm. It is found in the nucleus. It carries out the reaction L,L-cystathionine + H2O = L-homocysteine + pyruvate + NH4(+). The catalysed reaction is an S-substituted L-cysteine + H2O = a thiol + pyruvate + NH4(+). The protein operates within amino-acid biosynthesis; L-methionine biosynthesis via de novo pathway; L-homocysteine from L-cystathionine: step 1/1. Functionally, involved in de novo synthesis of methionine. In Neurospora crassa (strain ATCC 24698 / 74-OR23-1A / CBS 708.71 / DSM 1257 / FGSC 987), this protein is Cystathionine beta-lyase (met-2).